We begin with the raw amino-acid sequence, 594 residues long: Ferredoxin--nitrite reductase, chloroplastic (594 aa).

Residues 1 to 32 (MASLPVNKIIPSSTTLLSSSNNNRRRNNSSIR) constitute a chloroplast transit peptide. Low complexity predominate over residues 13-22 (STTLLSSSNN). A disordered region spans residues 13-36 (STTLLSSSNNNRRRNNSSIRCQKA). Residues cysteine 473, cysteine 479, cysteine 514, and cysteine 518 each contribute to the [4Fe-4S] cluster site. Cysteine 518 contacts siroheme.

The protein belongs to the nitrite and sulfite reductase 4Fe-4S domain family. Monomer. Requires siroheme as cofactor. The cofactor is [4Fe-4S] cluster.

It localises to the plastid. The protein resides in the chloroplast. It catalyses the reaction 6 oxidized [2Fe-2S]-[ferredoxin] + NH4(+) + 2 H2O = nitrite + 6 reduced [2Fe-2S]-[ferredoxin] + 8 H(+). Its pathway is nitrogen metabolism; nitrate reduction (assimilation). The protein is Ferredoxin--nitrite reductase, chloroplastic (NIR) of Spinacia oleracea (Spinach).